The primary structure comprises 189 residues: HTH-type transcriptional repressor LfrR (189 aa).

The 59-residue stretch at Glu-12–Ser-70 folds into the HTH tetR-type domain. The H-T-H motif DNA-binding region spans Ala-33–Tyr-52. The segment at Ser-70 to Asn-71 is proflavine binding.

In terms of assembly, homodimer. Forms a structurally asymmetric homodimer exhibiting local unfolding and a blocked drug-binding site.

With respect to regulation, repressor activity is regulated by binding of different substrates of the LfrA multidrug efflux pump, such as acriflavine, proflavine, ethidium bromide and rhodamine 123. Binding of these ligands causes the dissociation of LfrR from the promoter, inducing lfrA expression. In terms of biological role, represses the transcription of the lfrRA operon by binding directly to the promoter region of lfrR-lfrA. Binds specifically to a 143-bp region upstream of the lfrR gene. The protein is HTH-type transcriptional repressor LfrR of Mycolicibacterium smegmatis (strain ATCC 700084 / mc(2)155) (Mycobacterium smegmatis).